Consider the following 165-residue polypeptide: UPF0303 protein Rleg2_2653 (165 aa).

This sequence belongs to the UPF0303 family.

The chain is UPF0303 protein Rleg2_2653 from Rhizobium leguminosarum bv. trifolii (strain WSM2304).